Consider the following 509-residue polypeptide: Maturase K (509 aa).

The protein belongs to the intron maturase 2 family. MatK subfamily.

It is found in the plastid. It localises to the chloroplast. Functionally, usually encoded in the trnK tRNA gene intron. Probably assists in splicing its own and other chloroplast group II introns. This is Maturase K from Nicotiana clevelandii (Wild tobacco).